A 252-amino-acid polypeptide reads, in one-letter code: Probable S-methyl-5'-thioinosine phosphorylase (252 aa).

Residues T8 and 44–45 (RH) contribute to the phosphate site. M173 contributes to the substrate binding site. Position 174 (T174) interacts with phosphate. Residue 197 to 199 (NYA) coordinates substrate.

The protein belongs to the PNP/MTAP phosphorylase family. MTAP subfamily. Homotrimer.

The catalysed reaction is S-methyl-5'-thioinosine + phosphate = 5-(methylsulfanyl)-alpha-D-ribose 1-phosphate + hypoxanthine. It functions in the pathway purine metabolism; purine nucleoside salvage. Functionally, catalyzes the reversible phosphorylation of S-methyl-5'-thioinosine (MTI) to hypoxanthine and 5-methylthioribose-1-phosphate. Involved in the breakdown of S-methyl-5'-thioadenosine (MTA), a major by-product of polyamine biosynthesis. Catabolism of (MTA) occurs via deamination to MTI and phosphorolysis to hypoxanthine. This is Probable S-methyl-5'-thioinosine phosphorylase from Methanocaldococcus jannaschii (strain ATCC 43067 / DSM 2661 / JAL-1 / JCM 10045 / NBRC 100440) (Methanococcus jannaschii).